Here is a 192-residue protein sequence, read N- to C-terminus: Large ribosomal subunit protein uL3 (192 aa).

This sequence belongs to the universal ribosomal protein uL3 family. As to quaternary structure, part of the 50S ribosomal subunit. Forms a cluster with proteins L14 and L19.

One of the primary rRNA binding proteins, it binds directly near the 3'-end of the 23S rRNA, where it nucleates assembly of the 50S subunit. The protein is Large ribosomal subunit protein uL3 (rplC) of Wolinella succinogenes (strain ATCC 29543 / DSM 1740 / CCUG 13145 / JCM 31913 / LMG 7466 / NCTC 11488 / FDC 602W) (Vibrio succinogenes).